Consider the following 273-residue polypeptide: Protein GMH1 (273 aa).

The interval 1–33 (MSYLPTYSNDLPAGPQGQRRRNNGNENDARQGY) is disordered. Residue S2 is modified to N-acetylserine. Residues 2-89 (SYLPTYSNDL…QTKNQWARDD (88 aa)) are Cytoplasmic-facing. A helical transmembrane segment spans residues 90–110 (PSFFIFQIALISLSSIIWSIY). Topologically, residues 111–134 (NSGFNNDSDMGALSIIGHFFKSLV) are lumenal. The chain crosses the membrane as a helical span at residues 135–155 (MMVILDFFIFGFIMATIFYLL). At 156 to 175 (LNRSHFKFKSSQNSVVEWAY) the chain is on the cytoplasmic side. The helical transmembrane segment at 176–196 (CFDVHCNSFLIILLCLYFIQF) threads the bilayer. Over 197 to 216 (LLLPIINLQNWISLLIGNSL) the chain is Lumenal. A helical membrane pass occupies residues 217–237 (YCFAIGHYFILTFYGYNQLPF). The Cytoplasmic portion of the chain corresponds to 238 to 242 (LKNLN). A helical membrane pass occupies residues 243–263 (FILLPTLGLSIIYLISLFGID). Over 264–273 (LSKKLSFYNY) the chain is Lumenal.

It belongs to the unc-50 family. As to quaternary structure, interacts with GEA1 and GEA2.

It is found in the golgi apparatus membrane. The protein localises to the endoplasmic reticulum membrane. The protein is Protein GMH1 (GMH1) of Saccharomyces cerevisiae (strain ATCC 204508 / S288c) (Baker's yeast).